The chain runs to 517 residues: L-amino-acid oxidase (517 aa).

The N-terminal stretch at 1 to 19 is a signal peptide; that stretch reads MNVFSIFSLVFLAAFGSCA. A disulfide bridge connects residues Cys-29 and Cys-192. Residues 62–63, 82–83, Arg-90, and 106–109 contribute to the FAD site; these read MA, EA, and GPMR. Arg-109 is a substrate binding site. N-linked (GlcNAc...) asparagine glycosylation occurs at Asn-191. Position 280 (Val-280) interacts with FAD. Residues Cys-350 and Cys-431 are joined by a disulfide bond. An N-linked (GlcNAc...) asparagine glycan is attached at Asn-380. Tyr-391 serves as a coordination point for substrate. FAD-binding positions include Glu-476 and 483–488; that span reads GWLDST. 483 to 484 lines the substrate pocket; that stretch reads GW.

Belongs to the flavin monoamine oxidase family. FIG1 subfamily. Monomer. This is in contrast with most of its orthologs, that are non-covalently linked homodimers. The cofactor is FAD. In terms of processing, N-glycosylated. Expressed by the venom gland.

The protein resides in the secreted. The enzyme catalyses an L-alpha-amino acid + O2 + H2O = a 2-oxocarboxylate + H2O2 + NH4(+). The catalysed reaction is L-leucine + O2 + H2O = 4-methyl-2-oxopentanoate + H2O2 + NH4(+). It catalyses the reaction L-phenylalanine + O2 + H2O = 3-phenylpyruvate + H2O2 + NH4(+). It carries out the reaction L-tryptophan + O2 + H2O = indole-3-pyruvate + H2O2 + NH4(+). The enzyme catalyses L-methionine + O2 + H2O = 4-methylsulfanyl-2-oxobutanoate + H2O2 + NH4(+). The catalysed reaction is L-isoleucine + O2 + H2O = (S)-3-methyl-2-oxopentanoate + H2O2 + NH4(+). It catalyses the reaction L-arginine + O2 + H2O = 5-guanidino-2-oxopentanoate + H2O2 + NH4(+). It carries out the reaction L-aspartate + O2 + H2O = oxaloacetate + H2O2 + NH4(+). The enzyme catalyses L-histidine + O2 + H2O = 3-(imidazol-5-yl)pyruvate + H2O2 + NH4(+). The catalysed reaction is L-asparagine + O2 + H2O = 2-oxosuccinamate + H2O2 + NH4(+). It catalyses the reaction L-tyrosine + O2 + H2O = 3-(4-hydroxyphenyl)pyruvate + H2O2 + NH4(+). It carries out the reaction L-glutamine + O2 + H2O = 2-oxoglutaramate + H2O2 + NH4(+). The enzyme catalyses L-alanine + O2 + H2O = pyruvate + H2O2 + NH4(+). The catalysed reaction is L-lysine + O2 + H2O = 6-amino-2-oxohexanoate + H2O2 + NH4(+). It catalyses the reaction L-glutamate + O2 + H2O = H2O2 + 2-oxoglutarate + NH4(+). Functionally, catalyzes an oxidative deamination of predominantly hydrophobic and aromatic L-amino acids, thus producing hydrogen peroxide that may contribute to the diverse toxic effects of this enzyme. Is highly active against L-Tyr, L-Asp, L-Phe, L-Glu, L-Trp, L-His, L-Gln, L-Ile, L-Met, L-Leu and moderately active against L-Lys, L-Arg, L-Ala and L-Asn. Exhibits diverse biological activities, such as edema, inflammatory cell infiltration, cytotoxicity and apoptosis, as well as induction of platelet aggregation. Effects of snake L-amino oxidases on platelets are controversial, since they either induce aggregation or inhibit agonist-induced aggregation. These different effects are probably due to different experimental conditions. This protein may also induce hemorrhage, hemolysis, and have antibacterial and antiparasitic activities. The chain is L-amino-acid oxidase from Bungarus fasciatus (Banded krait).